A 193-amino-acid chain; its full sequence is Allatostatin A (193 aa).

The signal sequence occupies residues Met1–Ala25. A propeptide spanning residues Ala26–Tyr64 is cleaved from the precursor. At Ile74 the chain carries Isoleucine amide. Positions Trp78–Asp84 are excised as a propeptide. Ile94 and Ile105 each carry isoleucine amide. A propeptide spanning residues Asn109–Asp139 is cleaved from the precursor. Ile150 carries the isoleucine amide modification. A Serine amide modification is found at Ser165. Residues Leu169–Gln193 constitute a propeptide that is removed on maturation.

It belongs to the allatostatin family. As to expression, allatostatins A1, A2 and A3 are expressed in brain, antennal lobes, optical lobes, gnathal ganglia, the retrocerebral complex and thoracic, abdominal and ventral ganglia. Allatostain A4 is expressed in brain (at protein level).

The protein localises to the secreted. In terms of biological role, may act as a neurotransmitter or neuromodulator. This Camponotus floridanus (Florida carpenter ant) protein is Allatostatin A.